Here is a 455-residue protein sequence, read N- to C-terminus: Carbamoyl phosphate synthase arginine-specific small chain (455 aa).

Residues 1 to 28 constitute a mitochondrion transit peptide; sequence MFARFCKAIPAKGRAFPSVNASIQSRLM. The Glutamine amidotransferase type-1 domain occupies 219 to 406; it reads HVAVIDCGVK…IDSVRKYKAN (188 aa). The active-site Nucleophile is Cys295. Catalysis depends on residues His379 and Glu381.

This sequence belongs to the CarA family. Heterodimer composed of 2 chains; the small (or glutamine) chain promotes the hydrolysis of glutamine to ammonia, which is used by the large (or ammonia) chain to synthesize carbamoyl phosphate.

The protein resides in the mitochondrion matrix. The catalysed reaction is hydrogencarbonate + L-glutamine + 2 ATP + H2O = carbamoyl phosphate + L-glutamate + 2 ADP + phosphate + 2 H(+). The enzyme catalyses L-glutamine + H2O = L-glutamate + NH4(+). It functions in the pathway amino-acid biosynthesis; L-arginine biosynthesis; carbamoyl phosphate from bicarbonate: step 1/1. Small subunit of the arginine-specific carbamoyl phosphate synthase (CPSase). CPSase catalyzes the formation of carbamoyl phosphate from the ammonia moiety of glutamine, carbonate, and phosphate donated by ATP, the first step of the arginine biosynthetic pathway. The small subunit (glutamine amidotransferase) binds and cleaves glutamine to supply the large subunit with the substrate ammonia. This chain is Carbamoyl phosphate synthase arginine-specific small chain (cpa1), found in Aspergillus clavatus (strain ATCC 1007 / CBS 513.65 / DSM 816 / NCTC 3887 / NRRL 1 / QM 1276 / 107).